A 249-amino-acid chain; its full sequence is 3-deoxy-D-manno-octulosonic acid kinase (249 aa).

D175 is a catalytic residue.

The protein belongs to the protein kinase superfamily. KdkA/RfaP family.

The protein localises to the cell inner membrane. It catalyses the reaction an alpha-Kdo-(2-&gt;6)-lipid IVA + ATP = a 4-O-phospho-alpha-Kdo-(2-&gt;6)-lipid IVA + ADP + H(+). Its pathway is bacterial outer membrane biogenesis; LPS core biosynthesis. Its function is as follows. Catalyzes the ATP-dependent phosphorylation of the 3-deoxy-D-manno-octulosonic acid (Kdo) residue in Kdo-lipid IV(A) at the 4-OH position. The protein is 3-deoxy-D-manno-octulosonic acid kinase of Xanthomonas oryzae pv. oryzae (strain PXO99A).